A 2292-amino-acid polypeptide reads, in one-letter code: MKRHQFKSWIFELREIKNSHYFLDSWTKFDSVGSFTHIFFHQERFMKLFDPRIWSILLSRDSQGSTSNRYFTIKGVVLLVVAVLIYRINNRNMVERKNLYLMGLLPIPILPIPMNSIGPRNDTLEESFWSSNINRLIVSLLYLPKGKKISESCFMDPKESTWVLPITKKCIMPESNWGSRWWRNRIGKKRDSSCKISNETVAGIEISFKEKDIKYLEFLFVSYTDDPIRKDLDWEFFDRLSPRKKRNIINLNSGQLFEILVKHLICYLMSAFREKRPIEVEGFFKQQGAEATIQSNDIEHVSHLFSRNKWGISLQNCAQFHMWQFRQDLFVSWGKNQHESDFLRNVSRENWIWLDNVWLVNKDWFFSKVRNVSSNIQYDSTRSIFVQVTDSSQLKGSSDQSRDPFDSISNEDSEYHTLINQTEIQQLKERSILWDPSFLQTERTEIESDRFPKCLSGYSSMSRLFTEREKQMNNHLLPEEIEEFLGNPTRSIRSFFSDRWSELHLGSNPTERSTRDQKLLKKQQDVSFVPSRRSENKEMVDIFKIITYLQNTVSIHPISSDPGCDMVPKDEPDMGSSNKISFLNKNPFLDLFHLFHDRNKGGYTLHHDFESEERFQEMADLFTLSITEPDLVYHKGFAFSIDSYGLDQKKFLNEVFNSRDESKKKSLWVLPPIFDEENESFYRRIRKKSVRISCGNDLEDPKPKIVVFASNNIMEAVNQYRLIRNLIQIQYSTYGYIRNVSNRFFLMNRSDRNFEYGIQRDQIGNDTLNHLTRIKYTINQHLSNLKKSQKKWFDPLISRTERSMNRDPDAYRYKWSNGSKNFQEHLEHFVSEQKHRFQVVFDRLRINQYSIDWSEVIDKQDLSKSLRFFLSKSLLFLSKSLLFLSKSLPFFFVSIGNIPIHRSEIHIYELKVPNDQLCNQLLESIGVQIVHLNKLKPFLLDDHDTSQRSKFLINGGTISPFLFNKIPKWMIDSFHTRNNRRKSFDNTDSYFSMISRDRDNWLNPVKPFHRSSLISSFYKANRLRFLNNPHHFWFYCNKRFPFYVEKTRINNYDLTYGQFLNILFIRNKIFSLCVGKKKHVFLERDTISPIESQVSDIFIPNDFPQSGGETYNLYKSFHFPIRSDPFVRRAIYSIADISGTPLTEEQIVNFERTYCQPLSDMNLSDSEGKNLHQYLSFNSNMGLIHTPCSEKDLPSGKRKKRSLCLKKCVEKRQMYRTFQRDSAFSNLSKWNLFQTYMPWFLTSTGCKYLNFTLLDTFSDPLPILSSSQKFVSIFHDIMHGSDISWPIPQKKLWAILPQWNLISEISSKCLQNLLLSEEMIHRNNESPVPLIWTHLRSPNAREFLYSILFLLLVAGYLVRTHLLFVSRASSELQTELEKIKSLMIPSYMIELRKLLDRYPTSELNSFWLKNLFLVALEQLGDSLEEIRGSASGGNMLLGGGPAYGVKSIRSKKKYLNINLIDLISIIPNPINRITFSRNTRHLSRTSKEIYSLIRKRKNVNGDWIDDKIESWVANSDSIDDEEREFLVQFSTLTTEKRIDQILLSLTHSDHLSKNDSGYQMIEQPGSIYLRYLVDIHKKYLMNYEFNRSCLAERRIFLAHYQTITYSQTSCGANSSHFPSHGKPFSLRLALSPSRGILVIGSIGIGRSYLVKYLATNSYVPFITVFPNKFLDDKPKGYLIDDIDIDDSDDIDIDDSDDIDDDLDTELLTMTNVLTMYMTPKIDRFDITPQLELAKAMSPCIIWIPNIHDLYVNESNYLSLGLLVNYLSRDCERCSTRNILVIASTHIPKKVDPALIAPNKLNTCIKIRRLLIPQQRKHFFILSYTRGFHLEKKMFHTNGFGSMTMGSNARDLVALTNEALSISITQKKSIIDTNTIRSALHRQTWDLRSQVRSVQDHGILFYQIGRAVAQNVLLSNCPIDPISIYMKKKSCKEGDSYLYKWYFELGTSMKKLTILLYLLSCSAGSVAQDLWSPPGPDEKNGITSYGFVENDSDLVHGLLEVEGALVGSSRTEKDCSQFDNDRVTLLLRSEPRNQLDMMQNGSCSIVDQRFLYEKYESEFEGGEGEGALDPQQIEEDLFNHIVWAPRIWRPCGNLFDCIERTNELGFPYWARSFRGKRIIYHKEDELQENDSEFLQSGTMQYQTRDRSSKEQGFFRISQFVWDPADPFFFLFKDQPFVSVFSRREFFADEEMSKGLITSQTNPPTSIYKRWFIKNTQEKHFELLIHRQRWLRTNSSLSNGSFRSNTPSESYQYLSNLFLSNGTLLDQMTKALLRKRWLFPDEMKHLIHVRFPIP.

An ATP-binding site is contributed by 1640–1647 (GSIGIGRS).

The protein belongs to the Ycf2 family.

The protein localises to the plastid. It is found in the chloroplast stroma. In terms of biological role, probable ATPase of unknown function. Its presence in a non-photosynthetic plant (Epifagus virginiana) and experiments in tobacco indicate that it has an essential function which is probably not related to photosynthesis. The chain is Protein Ycf2 from Liriodendron tulipifera (Tuliptree).